The primary structure comprises 506 residues: Xaa-Pro aminopeptidase 3 (506 aa).

Residues 1–31 constitute a mitochondrion transit peptide; sequence MLSLLSTPRLVPVIARLRGLSGCMSCLQRRY. The tract at residues 54–79 is interaction with TNFRSF1B; that stretch reads HPHLLRPGEVTPGLSQVEYALRRHKL. Residues Y300, D331, D342, H423, H430, E450, and E474 each coordinate substrate. Mn(2+) is bound by residues D331, D342, and H423. Mn(2+) is bound by residues E450 and E474.

It belongs to the peptidase M24B family. In terms of assembly, homodimer. Interacts with TNFRSF1B/TNFR2 (activated) and TRAF2. The cofactor is Mn(2+). Expressed in the kidney, specifically in intercalated cells, but not in principal cells, of the distal convoluted tubule and cortical collecting duct (at protein level).

The protein localises to the mitochondrion. Its subcellular location is the cytoplasm. It carries out the reaction Release of any N-terminal amino acid, including proline, that is linked to proline, even from a dipeptide or tripeptide.. Functionally, catalyzes the removal of a penultimate prolyl residue from the N-termini of peptides, such as Leu-Pro-Ala. Also shows low activity towards peptides with Ala or Ser at the P1 position. Promotes TNFRSF1B-mediated phosphorylation of MAPK8/JNK1 and MAPK9/JNK2, suggesting a function as an adapter protein for TNFRSF1B; the effect is independent of XPNPEP3 peptidase activity. May inhibit apoptotic cell death induced via TNF-TNFRSF1B signaling. This chain is Xaa-Pro aminopeptidase 3 (Xpnpep3), found in Rattus norvegicus (Rat).